The following is a 47-amino-acid chain: Large ribosomal subunit protein eL40 (47 aa).

This sequence belongs to the eukaryotic ribosomal protein eL40 family.

The protein is Large ribosomal subunit protein eL40 of Methanococcus vannielii (strain ATCC 35089 / DSM 1224 / JCM 13029 / OCM 148 / SB).